The primary structure comprises 483 residues: Glycogen synthase kinase-3 alpha (483 aa).

The span at M1 to G15 shows a compositional bias: gly residues. The interval M1–D96 is disordered. An N-acetylserine modification is found at S2. Residue S2 is modified to Phosphoserine. S21 bears the Phosphoserine; by PKB/AKT1 mark. Residues P25–A82 are compositionally biased toward gly residues. 3 positions are modified to phosphoserine: S72, S77, and S97. The 285-residue stretch at Y119–F403 folds into the Protein kinase domain. Residues I125–V133 and K148 contribute to the ATP site. D244 (proton acceptor) is an active-site residue. Y279 is modified (phosphotyrosine). Positions P443–S483 are disordered. Residues G450 to D469 are compositionally biased toward polar residues.

This sequence belongs to the protein kinase superfamily. CMGC Ser/Thr protein kinase family. GSK-3 subfamily. Monomer. Interacts with ARRB2, AXIN1 and CTNNB1/beta-catenin. Interacts with CTNND2. Interacts with LMBR1L. Interacts with DDX3X. Interacts with TNFRSF10B. Phosphorylated by AKT1 at Ser-21: upon insulin-mediated signaling, the activated PKB/AKT1 protein kinase phosphorylates and deactivates GSK3A, resulting in the dephosphorylation and activation of GYS1. Activated by phosphorylation at Tyr-279.

It catalyses the reaction L-seryl-[tau protein] + ATP = O-phospho-L-seryl-[tau protein] + ADP + H(+). The enzyme catalyses L-threonyl-[tau protein] + ATP = O-phospho-L-threonyl-[tau protein] + ADP + H(+). The catalysed reaction is L-seryl-[protein] + ATP = O-phospho-L-seryl-[protein] + ADP + H(+). It carries out the reaction L-threonyl-[protein] + ATP = O-phospho-L-threonyl-[protein] + ADP + H(+). Activated by phosphorylation at Tyr-279. In response to insulin, inhibited by phosphorylation at Ser-21 by PKB/AKT1; phosphorylation at this site causes a conformational change, preventing access of substrates to the active site. Inhibited by lithium. Its function is as follows. Constitutively active protein kinase that acts as a negative regulator in the hormonal control of glucose homeostasis, Wnt signaling and regulation of transcription factors and microtubules, by phosphorylating and inactivating glycogen synthase (GYS1 or GYS2), CTNNB1/beta-catenin, APC and AXIN1. Requires primed phosphorylation of the majority of its substrates. Contributes to insulin regulation of glycogen synthesis by phosphorylating and inhibiting GYS1 activity and hence glycogen synthesis. Regulates glycogen metabolism in liver, but not in muscle. May also mediate the development of insulin resistance by regulating activation of transcription factors. In Wnt signaling, regulates the level and transcriptional activity of nuclear CTNNB1/beta-catenin. Facilitates amyloid precursor protein (APP) processing and the generation of APP-derived amyloid plaques found in Alzheimer disease. May be involved in the regulation of replication in pancreatic beta-cells. Is necessary for the establishment of neuronal polarity and axon outgrowth. Through phosphorylation of the anti-apoptotic protein MCL1, may control cell apoptosis in response to growth factors deprivation. Acts as a regulator of autophagy by mediating phosphorylation of KAT5/TIP60 under starvation conditions, activating KAT5/TIP60 acetyltransferase activity and promoting acetylation of key autophagy regulators, such as ULK1 and RUBCNL/Pacer. Negatively regulates extrinsic apoptotic signaling pathway via death domain receptors. Promotes the formation of an anti-apoptotic complex, made of DDX3X, BRIC2 and GSK3B, at death receptors, including TNFRSF10B. The anti-apoptotic function is most effective with weak apoptotic signals and can be overcome by stronger stimulation. In Rattus norvegicus (Rat), this protein is Glycogen synthase kinase-3 alpha (Gsk3a).